A 574-amino-acid polypeptide reads, in one-letter code: Membrane protein insertase YidC (574 aa).

A helical membrane pass occupies residues 6–26; the sequence is VFLIFAWLMVAALLWMEWGKE. The interval 65 to 85 is disordered; it reads QAGAPGKVPATSTTTATPAAA. 5 consecutive transmembrane segments (helical) span residues 350–370, 376–396, 447–467, 491–511, and 525–545; these read VIDYSRFSIMAIIGQGLFWVL, FLHNWGWAIVGLVVLLRLVLY, GGCLPLLIQMPIFFALYWVLV, FILPALNIAIMWATQKLTPTP, and PLVFGAMMAFVPSGLVLYWVV.

The protein belongs to the OXA1/ALB3/YidC family. Type 1 subfamily. Interacts with the Sec translocase complex via SecD. Specifically interacts with transmembrane segments of nascent integral membrane proteins during membrane integration.

The protein resides in the cell inner membrane. Required for the insertion and/or proper folding and/or complex formation of integral membrane proteins into the membrane. Involved in integration of membrane proteins that insert both dependently and independently of the Sec translocase complex, as well as at least some lipoproteins. Aids folding of multispanning membrane proteins. In Xanthomonas oryzae pv. oryzae (strain PXO99A), this protein is Membrane protein insertase YidC.